The following is a 206-amino-acid chain: uncharacterized protein (206 aa).

This is an uncharacterized protein from Citrus psorosis virus (isolate Spain/P-121) (CPsV).